We begin with the raw amino-acid sequence, 909 residues long: Ribosome-releasing factor 2, mitochondrial (909 aa).

The N-terminal 15 residues, 1–15 (MVAAPLLRAHQAARL), are a transit peptide targeting the mitochondrion. Residues 57-367 (DRTRNIGIIA…AVTNLLPSPP (311 aa)) form the tr-type G domain. 66 to 73 (AHIDAGKT) is a GTP binding site. Positions 121–148 (WPPQTAGDGNTTPQEPQTPRSASSHTVN) are disordered. A compositionally biased stretch (polar residues) spans 127 to 148 (GDGNTTPQEPQTPRSASSHTVN). GTP-binding positions include 151-155 (DTPGH) and 205-208 (NKLD).

It belongs to the TRAFAC class translation factor GTPase superfamily. Classic translation factor GTPase family. EF-G/EF-2 subfamily.

The protein localises to the mitochondrion. In terms of biological role, mitochondrial GTPase that mediates the disassembly of ribosomes from messenger RNA at the termination of mitochondrial protein biosynthesis. Not involved in the GTP-dependent ribosomal translocation step during translation elongation. The polypeptide is Ribosome-releasing factor 2, mitochondrial (mef2) (Aspergillus flavus (strain ATCC 200026 / FGSC A1120 / IAM 13836 / NRRL 3357 / JCM 12722 / SRRC 167)).